Consider the following 377-residue polypeptide: Compound eye opsin BCRH1 (377 aa).

The Extracellular portion of the chain corresponds to 1-53; sequence MANVTGPQMAFYGSGAATFGYPEGMTVADFVPDRVKHMVLDHWYNYPPVNPMW. The N-linked (GlcNAc...) asparagine glycan is linked to asparagine 3. The chain crosses the membrane as a helical span at residues 54-78; that stretch reads HYLLGVVYLFLGVISIAGNGLVIYL. Topologically, residues 79 to 90 are cytoplasmic; sequence YMKSQALKTPAN. Residues 91–115 traverse the membrane as a helical segment; the sequence is MLIVNLALSDLIMLTTNFPPFCYNC. At 116–131 the chain is on the extracellular side; the sequence is FSGGRWMFSGTYCEIY. A disulfide bond links cysteine 128 and cysteine 205. The chain crosses the membrane as a helical span at residues 132–151; sequence AALGAITGVCSIWTLCMISF. The Cytoplasmic portion of the chain corresponds to 152–170; it reads DRYNIICNGFNGPKLTQGK. Residues 171–194 traverse the membrane as a helical segment; it reads ATFMCGLAWVISVGWSLPPFFGWG. Residues 195 to 218 are Extracellular-facing; it reads SYTLEGILDSCSYDYFTRDMNTIT. Residues 219–246 form a helical membrane-spanning segment; it reads YNICIFIFDFFLPASVIVFSYVFIVKAI. The Cytoplasmic segment spans residues 247–281; the sequence is FAHEAAMRAQAKKMNVTNLRSNEAETQRAEIRIAK. A helical transmembrane segment spans residues 282-305; the sequence is TALVNVSLWFICWTPYAAITIQGL. Over 306–313 the chain is Extracellular; it reads LGNAEGIT. A helical transmembrane segment spans residues 314 to 338; the sequence is PLLTTLPALLAKSCSCYNPFVYAIS. At lysine 325 the chain carries N6-(retinylidene)lysine. Residues 339–377 lie on the Cytoplasmic side of the membrane; sequence HPKFRLAITQHLPWFCVHEKDPNDVEENQSSNTQTQEKS.

This sequence belongs to the G-protein coupled receptor 1 family. Opsin subfamily. Post-translationally, phosphorylated on some or all of the serine and threonine residues present in the C-terminal region. In terms of tissue distribution, expressed in all of the seven retinular cells (R1-R7) forming the main rhabdom in each ommatidium.

It localises to the membrane. Its function is as follows. Visual pigments are the light-absorbing molecules that mediate vision. They consist of an apoprotein, opsin, covalently linked to cis-retinal. This opsin produces visual pigments with maximal absorption in the blue-green region of the spectrum. This is Compound eye opsin BCRH1 from Hemigrapsus sanguineus (Asian shore crab).